The chain runs to 56 residues: Genome polyprotein (56 aa).

The segment at 1–30 is disordered; the sequence is ETMLDRIASGDLESSVDDPRSAEDKRFESH. The span at 17–30 shows a compositional bias: basic and acidic residues; the sequence is DDPRSAEDKRFESH.

It belongs to the picornaviridae polyprotein family. In terms of assembly, homopentamer. Homooligomer. Interacts with capsid protein VP2. Interacts with capsid protein VP3. Post-translationally, specific enzymatic cleavages by viral protease in vivo yield a variety of precursors and mature proteins. Polyprotein processing intermediates are produced, such as P1-2A which is a functional precursor of the structural proteins, VP0 which is a VP4-VP2 precursor, VP1-2A precursor, 3ABC precursor which is a stable and catalytically active precursor of 3A, 3B and 3C proteins, 3AB and 3CD precursors. The assembly signal 2A is removed from VP1-2A by a host protease, possibly host Cathepsin L. This cleavage occurs over a region of 3 amino-acids probably generating VP1 proteins with heterogeneous C-termini. The assembly signal 2A is removed from VP1-2A by a host protease, possibly host Cathepsin L in naked virions. This cleavage does not occur in enveloped virions. This cleavage occurs over a region of 3 amino-acids probably generating VP1 proteins with heterogeneous C-termini.

It is found in the virion. It localises to the host endosome. Its subcellular location is the host multivesicular body. Functionally, capsid proteins VP1, VP2, and VP3 form a closed capsid enclosing the viral positive strand RNA genome. All these proteins contain a beta-sheet structure called beta-barrel jelly roll. Together they form an icosahedral capsid (T=3) composed of 60 copies of each VP1, VP2, and VP3, with a diameter of approximately 300 Angstroms. VP1 is situated at the 12 fivefold axes, whereas VP2 and VP3 are located at the quasi-sixfold axes. The naked capsid interacts with the host receptor HAVCR1 to provide virion attachment to and probably entry into the target cell. Its function is as follows. Precursor component of immature procapsids that corresponds to an extended form of the structural protein VP1. After maturation, possibly by the host Cathepsin L, the assembly signal 2A is cleaved to give rise to the mature VP1 protein. This is Genome polyprotein from Callithrix (Owl-faced monkey).